The following is a 339-amino-acid chain: Ketol-acid reductoisomerase (NADP(+)) (339 aa).

The KARI N-terminal Rossmann domain maps to 1–182 (MRVYYDRDAD…GGGRAGVIET (182 aa)). Residues 24 to 27 (YGSQ), Arg-48, Ser-51, Thr-53, and 83 to 86 (DELQ) contribute to the NADP(+) site. Residue His-108 is part of the active site. Residue Gly-134 participates in NADP(+) binding. In terms of domain architecture, KARI C-terminal knotted spans 183–328 (TFKEECETDL…EKLRAMMPWI (146 aa)). Residues Asp-191, Glu-195, Glu-227, and Glu-231 each contribute to the Mg(2+) site. Ser-252 serves as a coordination point for substrate.

Belongs to the ketol-acid reductoisomerase family. Mg(2+) serves as cofactor.

The enzyme catalyses (2R)-2,3-dihydroxy-3-methylbutanoate + NADP(+) = (2S)-2-acetolactate + NADPH + H(+). The catalysed reaction is (2R,3R)-2,3-dihydroxy-3-methylpentanoate + NADP(+) = (S)-2-ethyl-2-hydroxy-3-oxobutanoate + NADPH + H(+). Its pathway is amino-acid biosynthesis; L-isoleucine biosynthesis; L-isoleucine from 2-oxobutanoate: step 2/4. The protein operates within amino-acid biosynthesis; L-valine biosynthesis; L-valine from pyruvate: step 2/4. Its function is as follows. Involved in the biosynthesis of branched-chain amino acids (BCAA). Catalyzes an alkyl-migration followed by a ketol-acid reduction of (S)-2-acetolactate (S2AL) to yield (R)-2,3-dihydroxy-isovalerate. In the isomerase reaction, S2AL is rearranged via a Mg-dependent methyl migration to produce 3-hydroxy-3-methyl-2-ketobutyrate (HMKB). In the reductase reaction, this 2-ketoacid undergoes a metal-dependent reduction by NADPH to yield (R)-2,3-dihydroxy-isovalerate. This chain is Ketol-acid reductoisomerase (NADP(+)), found in Xanthobacter autotrophicus (strain ATCC BAA-1158 / Py2).